Here is a 191-residue protein sequence, read N- to C-terminus: tRNA-specific adenosine deaminase 2 (191 aa).

Positions 20–145 constitute a CMP/dCMP-type deaminase domain; that stretch reads EETEKWMEEA…SVLNIASADL (126 aa). His71 is a binding site for Zn(2+). Glu73 functions as the Proton donor in the catalytic mechanism. Cys107 and Cys110 together coordinate Zn(2+).

The protein belongs to the cytidine and deoxycytidylate deaminase family. ADAT2 subfamily. Zn(2+) serves as cofactor.

It catalyses the reaction adenosine(34) in tRNA + H2O + H(+) = inosine(34) in tRNA + NH4(+). Functionally, probably participates in deamination of adenosine-34 to inosine in many tRNAs. This is tRNA-specific adenosine deaminase 2 (ADAT2) from Homo sapiens (Human).